The sequence spans 832 residues: Prickle-like protein 1-B (832 aa).

In terms of domain architecture, PET spans 14–122 (FGCQRSSTSD…NIKMLSRAVM (109 aa)). LIM zinc-binding domains are found at residues 124 to 188 (AMCE…ELLK), 189 to 249 (PRCS…HYAE), and 250 to 313 (YCES…EDVH). Disordered regions lie at residues 312–346 (VHAS…ADQC), 428–455 (QQPS…QRNN), 602–701 (ICQE…KERN), and 766–832 (CSSS…CIIS). Basic and acidic residues-rich tracts occupy residues 432–453 (EDNR…DLQR) and 603–614 (CQEKPPPEEKPM). Composition is skewed to basic residues over residues 669–680 (RPHHHRRRKSRK) and 816–832 (TKSK…CIIS). Cys-829 carries the post-translational modification Cysteine methyl ester. Cys-829 is lipidated: S-farnesyl cysteine. Positions 830-832 (IIS) are cleaved as a propeptide — removed in mature form.

Belongs to the prickle / espinas / testin family. As to quaternary structure, interacts with dvl2/dsh and mapk8/jnk1. Expressed in the dorsal marginal zone of early gastrulae (stage 10). As gastrulation proceeds, expression expands to include the lateral and ventral marginal zones, excluding the few rows of cells above the blastopore lip. Expression moves dorsally with gastrulation cell movements, and by the end of gastrulation expression is seen in dorsal mesoderm and posterior but not anterior neural ectoderm. Expression becomes down-regulated in mesoderm but remains strong in posterior ectoderm through the neurula stages. During tailbud stages, expressed in the pronephric duct, tailbud, tailtip and forming somites. In the most posterior regions, expressed in notochord and in the floorplate of the neural tube with weak expression in the roofplate. At stage 30, expressed in a complex pattern in the head including strong expression in the lens and otic vesicle.

The protein localises to the cell membrane. Functionally, acts in a planar cell polarity (PCP) complex; polarization along the apical/basal axis of epithelial cells. Regulates the polarized assembly of fibronectrin on the surface of the mesoderm during gastrulation. Essential for gastrulation cell movements, cooperating with dvl2/dsh to activate jnk. Acts together with tes to control axial elongation. The protein is Prickle-like protein 1-B (prickle1-b) of Xenopus laevis (African clawed frog).